Here is a 419-residue protein sequence, read N- to C-terminus: UDP-N-acetylglucosamine 1-carboxyvinyltransferase 2 (419 aa).

Residue 24–25 participates in phosphoenolpyruvate binding; sequence KN. Arg-94 is a UDP-N-acetyl-alpha-D-glucosamine binding site. The active-site Proton donor is the Cys-118. A 2-(S-cysteinyl)pyruvic acid O-phosphothioketal modification is found at Cys-118. UDP-N-acetyl-alpha-D-glucosamine-binding positions include 123 to 127, Asp-307, and Ile-329; that span reads RPIDQ.

This sequence belongs to the EPSP synthase family. MurA subfamily.

It localises to the cytoplasm. It catalyses the reaction phosphoenolpyruvate + UDP-N-acetyl-alpha-D-glucosamine = UDP-N-acetyl-3-O-(1-carboxyvinyl)-alpha-D-glucosamine + phosphate. It functions in the pathway cell wall biogenesis; peptidoglycan biosynthesis. Its function is as follows. Cell wall formation. Adds enolpyruvyl to UDP-N-acetylglucosamine. The protein is UDP-N-acetylglucosamine 1-carboxyvinyltransferase 2 of Staphylococcus epidermidis (strain ATCC 12228 / FDA PCI 1200).